The chain runs to 496 residues: Glycine receptor subunit beta (496 aa).

The first 22 residues, 1–22 (MKFSLAISFFILMSLLFEDACA), serve as a signal peptide directing secretion. The Extracellular portion of the chain corresponds to 23–268 (KEKSSKKGKG…IFTLRRQVGF (246 aa)). The interval 32-53 (GKKKQYLCPSQQSPEDLARVPP) is disordered. N54 carries an N-linked (GlcNAc...) asparagine glycan. R108 and S174 together coordinate glycine. Residues C183 and C197 are joined by a disulfide bond. Residue N242 is glycosylated (N-linked (GlcNAc...) asparagine). A disulfide bridge links C243 with C255. T250 contributes to the glycine binding site. The helical transmembrane segment at 269–289 (YMMGVYAPTLLIVVLSWLSFW) threads the bilayer. The Cytoplasmic segment spans residues 290-294 (INPDA). The helical transmembrane segment at 295 to 315 (SAARVPLGIFSVLSLASECTT) threads the bilayer. Over 316-327 (LAAELPKVSYVK) the chain is Extracellular. Residues 328–349 (ALDVWLIACLLFGFASLVEYAV) traverse the membrane as a helical segment. At 350–471 (VQVMLNNPKR…KPVIPTAAKR (122 aa)) the chain is on the cytoplasmic side. T391 bears the Phosphothreonine mark. The chain crosses the membrane as a helical span at residues 472–495 (IDLYARALFPFCFLFFNVIYWSIY). Residue L496 is a topological domain, extracellular.

This sequence belongs to the ligand-gated ion channel (TC 1.A.9) family. Glycine receptor (TC 1.A.9.3) subfamily. GLRB sub-subfamily. In terms of assembly, forms heteropentamers with glycin receptor alpha subunits. Heteropentamers with GLRA1 can be composed of two GLRA1 and three GLRB subunits, or three GLRA1 and two GLRB subunits, or four GLRA1 subunits and one GLRB subunit. Forms heteropentamers with GLRA2. Functional GLRB-GLRA2 heteropentamers contain four GLRA2 subunits and one GLRB subunit, although alternative subunit composition cannot be excluded. Forms a heteropentamer with GLRA3. Interacts with GPHN. In terms of tissue distribution, detected in spinal cord, brain and brain stem, especially in the periolivary region, spinal nuclei, trigeminal nucleus, medulla oblongata, pons and midbrain. Detected in the inner plexiform layer of the retina (at protein level). High levels of expression in cortex, hippocampus, thalamus and cerebellum. Detected in spinal cord.

Its subcellular location is the postsynaptic cell membrane. It is found in the synapse. The protein localises to the cell projection. The protein resides in the dendrite. It localises to the cell membrane. Its subcellular location is the cytoplasm. It catalyses the reaction chloride(in) = chloride(out). Its activity is regulated as follows. Channel opening is triggered by extracellular glycine. Heteropentameric channels composed of GLRB and GLRA1 are activated by lower glycine levels than homopentameric GLRA1. Its function is as follows. Subunit of heteromeric glycine-gated chloride channels. Plays an important role in the down-regulation of neuronal excitability. Contributes to the generation of inhibitory postsynaptic currents. The sequence is that of Glycine receptor subunit beta (Glrb) from Mus musculus (Mouse).